A 575-amino-acid polypeptide reads, in one-letter code: Sclareol synthase, chloroplastic (575 aa).

The N-terminal 51 residues, 1-51 (MSLAFNVGVTPFSGQRVGSRKEKFPVQGFPVTTPNRSRLIVNCSLTTIDFM), are a transit peptide targeting the chloroplast. Positions 329, 333, 473, 477, and 481 each coordinate Mg(2+). The DDXXD motif signature appears at 329–333 (DDFFD).

This sequence belongs to the terpene synthase family.

It is found in the plastid. It localises to the chloroplast. It catalyses the reaction 8-hydroxycopalyl diphosphate + H2O = sclareol + diphosphate. It functions in the pathway secondary metabolite biosynthesis; terpenoid biosynthesis. Involved in the biosynthesis of labdane-type diterpenoid including sclareol, a diterpene-diol that is used as fragrance and flavoring, and has anticancer effects (able to kill leukemic and colon cancer cells by apoptosis). Sclareol can also be used as synthesis precursor of ambergris substitution fragance products such as ambrox. Terpene synthase that catalyzes the conversion of 8-hydroxy-copalyl diphosphate to sclareol. The chain is Sclareol synthase, chloroplastic from Salvia sclarea (Clary sage).